We begin with the raw amino-acid sequence, 3938 residues long: Protein bassoon (3938 aa).

The segment at Met-1 to Ile-158 is disordered. Residue Gly-2 is the site of N-myristoyl glycine attachment. Positions Gly-9–Ala-29 are enriched in gly residues. The segment covering Lys-31–Val-61 has biased composition (low complexity). The segment at Pro-62–Pro-70 is 4 X 2 AA tandem repeats of P-G. 2 stretches are compositionally biased toward polar residues: residues Gln-86–Ala-98 and Gln-127–Ser-154. Ser-142 bears the Phosphoserine mark. Omega-N-methylarginine is present on Arg-145. 2 consecutive C4-type zinc fingers follow at residues Cys-167–Cys-190 and Cys-195–Cys-217. Disordered stretches follow at residues Thr-228 to Lys-346 and Leu-361 to Pro-456. Residues Ala-230–His-240 are compositionally biased toward polar residues. 2 positions are modified to phosphoserine: Ser-241 and Ser-245. The segment covering Leu-361–Pro-376 has biased composition (polar residues). Pro residues predominate over residues Pro-394–Thr-406. 2 C4-type zinc fingers span residues Cys-462–Cys-485 and Cys-490–Cys-512. Disordered regions lie at residues Gly-523 to Gly-921, Gly-934 to Gly-1247, Met-1294 to Ser-1541, and Arg-1561 to Ser-1611. Positions Ala-526–Gly-539 are enriched in pro residues. The span at Ser-548–Pro-589 shows a compositional bias: low complexity. Tandem repeats lie at residues Lys-568–Ala-574, Lys-575–Ala-581, and Lys-582–Lys-588. The interval Lys-568–Lys-588 is 3 X 7 AA tandem repeats of K-A-S-P-Q-A-[AK]. The segment covering Val-616 to Thr-629 has biased composition (pro residues). The span at Gln-668 to Leu-677 shows a compositional bias: polar residues. Positions Ser-678–Ser-692 are enriched in low complexity. Positions Glu-693–Val-702 are enriched in polar residues. 2 stretches are compositionally biased toward acidic residues: residues Phe-769 to Ser-784 and Ser-847 to Thr-858. Omega-N-methylarginine is present on Arg-863. Ser-965 bears the Phosphoserine mark. The segment covering Pro-979–Ser-996 has biased composition (low complexity). Positions Ile-1032–Thr-1087 form a coiled coil. Over residues Asp-1034 to Leu-1047 the composition is skewed to acidic residues. 2 positions are modified to phosphoserine: Ser-1035 and Ser-1036. Residues Leu-1048–Arg-1061 are compositionally biased toward basic and acidic residues. At Ser-1085 the chain carries Phosphoserine. Thr-1087 bears the Phosphothreonine mark. Ser-1093 and Ser-1099 each carry phosphoserine. Over residues Glu-1102–Ser-1117 the composition is skewed to basic and acidic residues. Low complexity-rich tracts occupy residues Cys-1118–Asp-1128 and Ser-1158–Pro-1175. Residues Leu-1176–Ala-1203 are a coiled coil. A compositionally biased stretch (basic and acidic residues) spans Lys-1177–Leu-1192. Residues Gln-1194–Arg-1204 show a composition bias toward low complexity. A compositionally biased stretch (polar residues) spans Ser-1211 to Tyr-1224. Position 1221 is a phosphoserine (Ser-1221). Residues Ser-1318 to Ser-1328 are compositionally biased toward low complexity. Thr-1339 carries O-linked (GlcNAc) threonine glycosylation. The segment covering Phe-1342–Lys-1351 has biased composition (basic and acidic residues). Low complexity-rich tracts occupy residues Leu-1352–Lys-1364 and Pro-1374–Pro-1386. Thr-1380 is a glycosylation site (O-linked (GlcNAc) threonine). Residues Ser-1402–Glu-1426 are compositionally biased toward polar residues. Residues Ser-1470, Ser-1479, and Ser-1481 each carry the phosphoserine modification. The segment covering Ser-1476–Ser-1487 has biased composition (low complexity). Composition is skewed to polar residues over residues Glu-1496–Ile-1510 and Arg-1561–Pro-1597. Residues Arg-1780 and Arg-1784 each carry the omega-N-methylarginine modification. Residue Arg-1794 is modified to Asymmetric dimethylarginine; alternate. The residue at position 1794 (Arg-1794) is an Omega-N-methylarginine; alternate. Arg-1806 is subject to Omega-N-methylarginine. The segment at Pro-1914–Pro-1964 is disordered. O-linked (GlcNAc) threonine glycosylation occurs at Thr-1922. Phosphoserine occurs at positions 1978 and 2034. Omega-N-methylarginine occurs at positions 2039 and 2069. Asymmetric dimethylarginine is present on residues Arg-2243, Arg-2253, and Arg-2259. Residues Ala-2280–Ser-2305 are disordered. Thr-2307 carries an O-linked (GlcNAc) threonine glycan. Disordered regions lie at residues Val-2318–Leu-2343 and Glu-2461–Ala-2486. A coiled-coil region spans residues Arg-2345 to Pro-2470. O-linked (GlcNAc) threonine glycosylation occurs at Thr-2510. The tract at residues Pro-2513–Ala-2648 is disordered. The segment covering Ser-2527–Glu-2537 has biased composition (polar residues). Ser-2564 carries the post-translational modification Phosphoserine. Phosphothreonine is present on residues Thr-2581 and Thr-2608. Over residues Arg-2629–Ala-2641 the composition is skewed to basic and acidic residues. An O-linked (GlcNAc) threonine glycan is attached at Thr-2685. Residues Glu-2715 to Asp-3263 are interaction with DAO. Phosphoserine occurs at positions 2796, 2845, and 2851. Residues Thr-2839 to Lys-2859 form a disordered region. Residue Thr-2930 is glycosylated (O-linked (GlcNAc) threonine). Residues Ser-2933 to Leu-2975 are a coiled coil. Residues Leu-2934–Leu-2996 form a sufficient for binding to ERC2 region. Ser-3007 carries the post-translational modification Phosphoserine. Over residues Thr-3055–Gly-3068 the composition is skewed to polar residues. 4 disordered regions span residues Thr-3055 to Glu-3148, Ala-3162 to Phe-3399, Gln-3414 to His-3546, and Tyr-3569 to Lys-3910. The span at Glu-3184–Asp-3196 shows a compositional bias: basic and acidic residues. The segment covering Ser-3198–Pro-3222 has biased composition (polar residues). The residue at position 3286 (Ser-3286) is a Phosphoserine. The segment covering Glu-3304–Tyr-3315 has biased composition (polar residues). 3 stretches are compositionally biased toward basic and acidic residues: residues Ser-3316 to Lys-3328, Gln-3358 to Glu-3377, and Leu-3450 to Ala-3469. Ser-3368 carries the post-translational modification Phosphoserine. Omega-N-methylarginine is present on Arg-3488. A compositionally biased stretch (low complexity) spans Pro-3506–Gly-3520. Composition is skewed to basic and acidic residues over residues Val-3535–His-3546 and Trp-3578–Asp-3588. Residues Glu-3638 to Arg-3651 are compositionally biased toward basic residues. Residues His-3652–Pro-3676 are compositionally biased toward basic and acidic residues. The span at Pro-3751 to Thr-3820 shows a compositional bias: low complexity. Residues Gln-3772–Ala-3803 adopt a coiled-coil conformation. Arg-3822 is subject to Omega-N-methylarginine. The span at Lys-3834–Ala-3848 shows a compositional bias: pro residues. 2 stretches are compositionally biased toward low complexity: residues Lys-3860 to Ala-3887 and Gly-3894 to Gly-3904.

Interacts with PCLO, ERC2/CAST1, RIMS1 and UNC13A. Interacts with TPRG1L. Interacts with DYNLL1 and DYNLL2; these interactions potentially link PTVs to dynein and myosin V motor complexes. Interacts with ATG5; this interaction is important for the regulation of presynaptic autophagy. Interacts (via C-terminus) with TRIO (via N-terminus). Interacts with CTBP1. Interacts with SIAH1; this interaction negatively regulates SIAH1 E3 ligase activity. Interacts (via coiled region) with DAO; the interaction is direct. In terms of processing, myristoylated. The N-terminal myristoylation is not sufficient for presynaptic localization. In terms of tissue distribution, detected at synapses in the stratum lucidum in the hippocampus CA3 region (at protein level).

Its subcellular location is the cytoplasm. It localises to the presynaptic active zone. The protein localises to the cytoskeleton. The protein resides in the cytoplasmic vesicle. It is found in the secretory vesicle. Its subcellular location is the synaptic vesicle membrane. Functionally, scaffold protein of the presynaptic cytomatrix at the active zone (CAZ) which is the place in the synapse where neurotransmitter is released. After synthesis, participates in the formation of Golgi-derived membranous organelles termed Piccolo-Bassoon transport vesicles (PTVs) that are transported along axons to sites of nascent synaptic contacts. At the presynaptic active zone, regulates the spatial organization of synaptic vesicle cluster, the protein complexes that execute membrane fusion and compensatory endocytosis. Also functions in processes other than assembly such as the regulation of specific presynaptic protein ubiquitination by interacting with SIAH1 or the regulation of presynaptic autophagy by associating with ATG5. Also mediates synapse to nucleus communication leading to reconfiguration of gene expression by associating with the transcriptional corepressor CTBP1 and by subsequently reducing the size of its pool available for nuclear import. Inhibits the activity of the proportion of DAO enzyme that localizes to the presynaptic active zone, which may modulate synaptic transmission. In Rattus norvegicus (Rat), this protein is Protein bassoon.